The primary structure comprises 251 residues: Flap endonuclease Xni (251 aa).

Position 104 (Asp104) interacts with Mg(2+). The 5'-3' exonuclease domain maps to 160 to 249 (VQPQQLPDYW…IDGNLQQLRL (90 aa)). K(+) contacts are provided by Leu171, Ala172, Pro180, Val182, and Ile185. The interaction with DNA stretch occupies residues 184-189 (GIGPKS).

This sequence belongs to the Xni family. Mg(2+) serves as cofactor. Requires K(+) as cofactor.

In terms of biological role, has flap endonuclease activity. During DNA replication, flap endonucleases cleave the 5'-overhanging flap structure that is generated by displacement synthesis when DNA polymerase encounters the 5'-end of a downstream Okazaki fragment. The protein is Flap endonuclease Xni of Escherichia coli O17:K52:H18 (strain UMN026 / ExPEC).